We begin with the raw amino-acid sequence, 1416 residues long: Tiny macrocysts protein B (1416 aa).

8 helical membrane-spanning segments follow: residues 47 to 67, 93 to 113, 140 to 160, 185 to 205, 231 to 251, 253 to 273, 285 to 305, and 315 to 335; these read ILTI…GFKH, FGYL…ILGF, FVSF…LIGL, ANLP…IVAF, VTVL…DFVP, LTSI…IIVL, SGFY…MGIN, and ITIV…MFYF. Basic and acidic residues predominate over residues 356–372; it reads LKDANKKGKRNSVEKES. Disordered stretches follow at residues 356-377 and 662-691; these read LKDA…PTSK and IEKS…RRGK. A run of 2 helical transmembrane segments spans residues 706-726 and 953-973; these read WLMI…LVVF and AILY…AVLF. 2 disordered regions span residues 1018-1103 and 1119-1144; these read RDNL…RPLM and NVRL…ATRT. Residues 1024–1039 are compositionally biased toward acidic residues; that stretch reads TTDDDGRDDHLGEDDN. 2 stretches are compositionally biased toward low complexity: residues 1048–1062 and 1083–1094; these read NNNN…NNNN and SSSGSNVLNTSS. A compositionally biased stretch (basic and acidic residues) spans 1123–1144; sequence QAKDEEITNGGGERKGSDATRT. 3 consecutive transmembrane segments (helical) span residues 1179 to 1199, 1325 to 1345, and 1358 to 1378; these read ILAT…TFTV, WFLA…FTYF, and VLTA…VVLF.

The protein localises to the membrane. Regulator of the cAMP signaling pathway specific to sexual development. Controls the levels of external cAMP by regulating the expression of phosphodiesterase pdsA and its inhibitor pdiA. The sequence is that of Tiny macrocysts protein B (tmcB) from Dictyostelium discoideum (Social amoeba).